Here is a 542-residue protein sequence, read N- to C-terminus: Aspartate kinase FUB3 (542 aa).

ACT domains are found at residues 404-472 and 478-542; these read ILSN…VLPD and LVGA…KSAI.

This sequence belongs to the aspartokinase family.

The enzyme catalyses L-aspartate + ATP = 4-phospho-L-aspartate + ADP. Its pathway is mycotoxin biosynthesis. In terms of biological role, aspartate kinase; part of the gene cluster that mediates the biosynthesis of fusaric acid, a mycotoxin with low to moderate toxicity to animals and humans, but with high phytotoxic properties. L-aspartate is suggested as fusaric acid amino acid precursor that is activated and further processed to O-acetyl-L-homoserine by cluster enzymes aspartate kinase FUB3 and homoserine O-acetyltransferase FUB5, as well as enzymes of the primary metabolism. The polyketide synthase (PKS) FUB1 generates the triketide trans-2-hexenal which is presumptively released by the hydrolase FUB4 and linked to the NRPS-bound amino acid precursor by NAD(P)-dependent dehydrogenase FUB6. FUB1, FUB4, and the non-canonical NRPS Fub8 may form an enzyme complex. Further processing of the NRPS-bound intermediate might be carried out by FUB6 and the sulfhydrylase FUB7, enabling a spontaneous electrocyclization to close the carbon backbone of fusaric acid. Dihydrofusaric acid is likely to be released via reduction by the thioester reductase (TR) domain of FUB8 whereupon the final oxidation to fusaric acid may (also) be performed by the FMN-dependent dehydrogenase FUB9. The polypeptide is Aspartate kinase FUB3 (Fusarium oxysporum f. sp. lycopersici (strain 4287 / CBS 123668 / FGSC 9935 / NRRL 34936) (Fusarium vascular wilt of tomato)).